A 374-amino-acid chain; its full sequence is All-trans-retinol dehydrogenase [NAD(+)] ADH7 (374 aa).

Residues Cys-47, His-68, Cys-98, Cys-101, Cys-104, Cys-112, and Cys-174 each coordinate Zn(2+). NAD(+)-binding positions include 199–204 (GLGGVG), Asp-223, Lys-228, 292–294 (VGA), and Arg-369.

Belongs to the zinc-containing alcohol dehydrogenase family. Class-IV subfamily. Homodimer. It depends on Zn(2+) as a cofactor. As to expression, high expression in the stomach mucosa. Lower expression in eye, thymus, skin and ovary. Very low expression in small intestine, liver and uterus.

The protein resides in the cytoplasm. The enzyme catalyses a primary alcohol + NAD(+) = an aldehyde + NADH + H(+). It carries out the reaction 10-hydroxydecanoate + NAD(+) = 10-oxodecanoate + NADH + H(+). It catalyses the reaction all-trans-retinol + NAD(+) = all-trans-retinal + NADH + H(+). The catalysed reaction is 9-cis-retinol + NAD(+) = 9-cis-retinal + NADH + H(+). The enzyme catalyses all-trans-3,4-didehydroretinol + NAD(+) = all-trans-3,4-didehydroretinal + NADH + H(+). It carries out the reaction all-trans-4-hydroxyretinol + NAD(+) = all-trans-4-hydroxyretinal + NADH + H(+). It catalyses the reaction all-trans-4-oxoretinol + NAD(+) = all-trans-4-oxoretinal + NADH + H(+). The catalysed reaction is 12-hydroxydodecanoate + NAD(+) = 12-oxododecanoate + NADH + H(+). The enzyme catalyses 16-hydroxyhexadecanoate + NAD(+) = 16-oxohexadecanoate + NADH + H(+). It carries out the reaction hexan-1-ol + NAD(+) = hexanal + NADH + H(+). It catalyses the reaction (E)-hex-2-en-1-ol + NAD(+) = (E)-hex-2-enal + NADH + H(+). The catalysed reaction is (E)-4-hydroxynon-2-en-1-ol + NAD(+) = (E)-4-hydroxynon-2-enal + NADH + H(+). Its activity is regulated as follows. Retinol oxidation is inhibited by the detergent Tween 80. Ethanol inhibits both all-trans-retinol and 9-cis-retinol oxidation. 13-cis-retinol is an effective competitive inhibitor of the 9-cis-retinol oxidation. All-trans-retinoic acid is a powerful inhibitor of all-trans-retinol oxidation. 13-cis-retinoic acid is a powerful inhibitor of all-trans-retinol oxidation. Cimetidine competitively inhibited ethanol oxidation. Functionally, catalyzes the NAD-dependent oxidation of all-trans-retinol, alcohol, aldehyde and omega-hydroxy fatty acids and their derivatives. Oxidizes preferentially all trans-retinol, all-trans-4-hydroxyretinol, 9-cis-retinol, 2-hexenol, and long chain omega-hydroxy fatty acids such as juniperic acid. In vitro can also catalyze the NADH-dependent reduction of all-trans-retinal and aldehydes and their derivatives. Reduces preferentially all trans-retinal, all-trans-4-oxoretinal and hexanal. Catalyzes in the oxidative direction with higher efficiency. Therefore may participate in retinoid metabolism, fatty acid omega-oxidation, and elimination of cytotoxic aldehydes produced by lipid peroxidation. This Mus musculus (Mouse) protein is All-trans-retinol dehydrogenase [NAD(+)] ADH7 (Adh7).